The primary structure comprises 163 residues: 3-hydroxyacyl-[acyl-carrier-protein] dehydratase FabZ (163 aa).

Residue His-58 is part of the active site.

This sequence belongs to the thioester dehydratase family. FabZ subfamily.

The protein resides in the cytoplasm. The catalysed reaction is a (3R)-hydroxyacyl-[ACP] = a (2E)-enoyl-[ACP] + H2O. In terms of biological role, involved in unsaturated fatty acids biosynthesis. Catalyzes the dehydration of short chain beta-hydroxyacyl-ACPs and long chain saturated and unsaturated beta-hydroxyacyl-ACPs. The chain is 3-hydroxyacyl-[acyl-carrier-protein] dehydratase FabZ from Francisella tularensis subsp. tularensis (strain FSC 198).